The primary structure comprises 770 residues: DNA ligase 1 (770 aa).

Over residues 1–18 (MSTGEGTAEQTATGTPAQ) the composition is skewed to low complexity. The tract at residues 1 to 27 (MSTGEGTAEQTATGTPAQNGRESIPSD) is disordered. NAD(+) contacts are provided by residues 57-61 (DAEFD), 106-107 (SL), and Glu-142. Lys-144 (N6-AMP-lysine intermediate) is an active-site residue. The NAD(+) site is built by Arg-165, Glu-202, Lys-318, and Lys-342. Positions 439, 442, 458, and 464 each coordinate Zn(2+). The region spanning 657–746 (STPRTLEGLT…PAAVGDAAEA (90 aa)) is the BRCT domain. The segment at 741–770 (GDAAEADGGDAPEESAALQEEKAAAVEETA) is disordered. Acidic residues predominate over residues 744 to 753 (AEADGGDAPE). Basic and acidic residues predominate over residues 759–770 (QEEKAAAVEETA).

This sequence belongs to the NAD-dependent DNA ligase family. LigA subfamily. Mg(2+) is required as a cofactor. It depends on Mn(2+) as a cofactor.

The catalysed reaction is NAD(+) + (deoxyribonucleotide)n-3'-hydroxyl + 5'-phospho-(deoxyribonucleotide)m = (deoxyribonucleotide)n+m + AMP + beta-nicotinamide D-nucleotide.. Its function is as follows. DNA ligase that catalyzes the formation of phosphodiester linkages between 5'-phosphoryl and 3'-hydroxyl groups in double-stranded DNA using NAD as a coenzyme and as the energy source for the reaction. It is essential for DNA replication and repair of damaged DNA. This is DNA ligase 1 from Pseudarthrobacter chlorophenolicus (strain ATCC 700700 / DSM 12829 / CIP 107037 / JCM 12360 / KCTC 9906 / NCIMB 13794 / A6) (Arthrobacter chlorophenolicus).